Reading from the N-terminus, the 238-residue chain is Thymidine kinase, cytosolic (238 aa).

The residue at position 2 (serine 2) is an N-acetylserine. Serine 2 and serine 13 each carry phosphoserine. Residues 26–33 (GPMFSGKS), 58–60 (DTR), and 97–100 (DEGQ) contribute to the ATP site. Catalysis depends on glutamate 98, which acts as the Proton acceptor. Phenylalanine 128 contacts substrate. Zn(2+) contacts are provided by cysteine 153 and cysteine 156. Substrate contacts are provided by residues 172 to 176 (VEVIG) and tyrosine 181. Zn(2+)-binding residues include cysteine 185 and cysteine 188. The short motif at 206 to 208 (KEN) is the KEN box element. Position 235 is a phosphoserine (serine 235).

The protein belongs to the thymidine kinase family. Homotetramer. Tetramerization from dimerization is induced by ATP and increases catalytic efficiency due to a high affinity for thymidine. Tetramerization is inhibited by phosphorylation at Ser-13. Interacts (via the KEN box) with FZR1. Post-translationally, phosphorylated on Ser-13 in mitosis. Phosphorylation of Ser-13 by CDK1 during mitosis reduces homotetramerization and catalytic efficiency when DNA replication is complete and intracellular TK1 is still present at a high level. In terms of processing, polyubiquitinated. Postmitosis, ubiquitination leads to proteasomal degradation. The KEN box sequence located at the C-terminal region targets for degradation by the anaphase promoting complex (APC/C) activated and rate-limited by FZR1.

It localises to the cytoplasm. It carries out the reaction thymidine + ATP = dTMP + ADP + H(+). Cell-cycle-regulated enzyme of importance in nucleotide metabolism. Catalyzes the first enzymatic step in the salvage pathway converting thymidine into thymidine monophosphate. Transcriptional regulation limits expression to the S phase of the cell cycle and transient expression coincides with the oscillation in the intracellular dTTP concentration. This Bos taurus (Bovine) protein is Thymidine kinase, cytosolic (TK1).